The chain runs to 326 residues: Ras association domain-containing protein 2 (326 aa).

The interval 111-133 (EVDAPPEGDQMPSSTDSRGLKPL) is disordered. Residues 176–264 (YNHKTSVFTP…SKVFLMEKDQ (89 aa)) enclose the Ras-associating domain. One can recognise an SARAH domain in the interval 272 to 319 (VAQYIKFEMPVLKSFIQKLQEEEDREVKKLMRKYTVLRLMIRQRLEEI).

Interacts directly with activated KRAS in a GTP-dependent manner. Interacts (via SARAH domain) with STK3/MST2 and STK4/MST1. Post-translationally, phosphorylated by STK3/MST2 and STK4/MST1. Widely expressed with highest levels in brain, placenta, peripheral blood and lung. Frequently down-regulated in lung tumor cell lines.

It localises to the nucleus. It is found in the cytoplasm. The protein localises to the chromosome. The protein resides in the centromere. Its subcellular location is the kinetochore. Functionally, potential tumor suppressor. Acts as a KRAS-specific effector protein. May promote apoptosis and cell cycle arrest. Stabilizes STK3/MST2 by protecting it from proteasomal degradation. This is Ras association domain-containing protein 2 (RASSF2) from Homo sapiens (Human).